We begin with the raw amino-acid sequence, 509 residues long: MDIRAAEISAILKDQIKNFGKEAEVSEVGQVLSVGDGIARVYGLDNVQAGEMVEFPGGIRGMALNLESDNVGVVIFGSDRDIKEGDTVKRTGAIVDVPVGPELLGRVVDALGNPIDGKGPINATRRSRVDVKAPGIIPRKSVHEPMSTGLKAIDALIPVGRGQRELVIGDRQTGKTAILLDAFLNQKAIHDNGPEGEKLYCVYVAVGQKRSTVAQFVKVLEERGALKYSIIIAATASDPAPMQFLAPFAGCAMGEYFRDNGMHALIGYDDLSKQAVSYRQMSLLLRRPPGREAYPGDVFYLHSRLLERAAKMNDDKGAGSLTALPVIETQGNDVSAFIPTNVISITDGQIFLETDLFYQGIRPAVNVGLSVSRVGSSAQIKAMKQVAGSIKGELAQYREMAAFAQFGSDLDAATQRLLNRGARLTELLKQPQFSPLKTEEQVAVIFAGVNGYLDKLPVAQVGKFEQGLLSYLRSEGSAILDAIRTEKAISDDTKGKLTAALDSFAKSFQ.

169–176 (GDRQTGKT) is a binding site for ATP.

It belongs to the ATPase alpha/beta chains family. F-type ATPases have 2 components, CF(1) - the catalytic core - and CF(0) - the membrane proton channel. CF(1) has five subunits: alpha(3), beta(3), gamma(1), delta(1), epsilon(1). CF(0) has three main subunits: a(1), b(2) and c(9-12). The alpha and beta chains form an alternating ring which encloses part of the gamma chain. CF(1) is attached to CF(0) by a central stalk formed by the gamma and epsilon chains, while a peripheral stalk is formed by the delta and b chains.

Its subcellular location is the cell inner membrane. The enzyme catalyses ATP + H2O + 4 H(+)(in) = ADP + phosphate + 5 H(+)(out). In terms of biological role, produces ATP from ADP in the presence of a proton gradient across the membrane. The alpha chain is a regulatory subunit. The chain is ATP synthase subunit alpha from Rhizobium etli (strain ATCC 51251 / DSM 11541 / JCM 21823 / NBRC 15573 / CFN 42).